Reading from the N-terminus, the 238-residue chain is Hydroxyacylglutathione hydrolase (238 aa).

Residues His-52, His-54, Asp-56, His-57, His-108, Asp-125, and His-163 each contribute to the Zn(2+) site.

This sequence belongs to the metallo-beta-lactamase superfamily. Glyoxalase II family. In terms of assembly, monomer. Requires Zn(2+) as cofactor.

It carries out the reaction an S-(2-hydroxyacyl)glutathione + H2O = a 2-hydroxy carboxylate + glutathione + H(+). It participates in secondary metabolite metabolism; methylglyoxal degradation; (R)-lactate from methylglyoxal: step 2/2. Its function is as follows. Thiolesterase that catalyzes the hydrolysis of S-D-lactoyl-glutathione to form glutathione and D-lactic acid. The chain is Hydroxyacylglutathione hydrolase from Haemophilus influenzae (strain ATCC 51907 / DSM 11121 / KW20 / Rd).